Reading from the N-terminus, the 232-residue chain is Rho-related GTP-binding protein Rho6 (232 aa).

GTP is bound by residues 23–28, 38–45, 67–71, 125–128, and 169–170; these read QCGKTA, YPETYVPT, DTSGS, CKTD, and AF. The Effector region signature appears at 42 to 50; the sequence is YVPTVFENY. Residue Cys229 is modified to Cysteine methyl ester. Cys229 carries the S-geranylgeranyl cysteine lipid modification. Positions 230-232 are cleaved as a propeptide — removed in mature form; that stretch reads SIM.

This sequence belongs to the small GTPase superfamily. Rho family. In terms of assembly, binds GRB7 and PLXNB1. Interacts with PLXNA2. Interacts with UBXD5.

It is found in the cell membrane. The protein localises to the cytoplasm. Its subcellular location is the cytoskeleton. Functionally, lacks intrinsic GTPase activity. Has a low affinity for GDP, and constitutively binds GTP. Controls rearrangements of the actin cytoskeleton. Induces the Rac-dependent neuritic process formation in part by disruption of the cortical actin filaments. Causes the formation of many neuritic processes from the cell body with disruption of the cortical actin filaments. The chain is Rho-related GTP-binding protein Rho6 (Rnd1) from Mus musculus (Mouse).